A 360-amino-acid polypeptide reads, in one-letter code: Nicotinate-nucleotide--dimethylbenzimidazole phosphoribosyltransferase (360 aa).

The active-site Proton acceptor is the E327.

The protein belongs to the CobT family.

The enzyme catalyses 5,6-dimethylbenzimidazole + nicotinate beta-D-ribonucleotide = alpha-ribazole 5'-phosphate + nicotinate + H(+). Its pathway is nucleoside biosynthesis; alpha-ribazole biosynthesis; alpha-ribazole from 5,6-dimethylbenzimidazole: step 1/2. Catalyzes the synthesis of alpha-ribazole-5'-phosphate from nicotinate mononucleotide (NAMN) and 5,6-dimethylbenzimidazole (DMB). The polypeptide is Nicotinate-nucleotide--dimethylbenzimidazole phosphoribosyltransferase (Shewanella baltica (strain OS185)).